We begin with the raw amino-acid sequence, 333 residues long: T-cell surface glycoprotein CD1b-2 (333 aa).

Positions 1–20 (MLLLPLLLLGVILPGGDNED) are cleaved as a signal peptide. Topologically, residues 21–302 (VFQGPTSFHL…LYWGHPTSIG (282 aa)) are extracellular. Asn-38, Asn-75, and Asn-146 each carry an N-linked (GlcNAc...) asparagine glycan. 3 cysteine pairs are disulfide-bonded: Cys-120-Cys-184, Cys-149-Cys-163, and Cys-224-Cys-279. Residues 185–295 (PRYLLGVLDA…LGDQDIILYW (111 aa)) form the Ig-like domain. Residues 303-323 (LILVAIIVPSLILSICLALWF) traverse the membrane as a helical segment. Residues 324–333 (WRRWSYQNIL) are Cytoplasmic-facing. Residues 329–332 (YQNI) carry the Internalization signal motif.

In terms of assembly, heterodimer with B2M (beta-2-microglobulin). Interacts with saposin C.

It is found in the cell membrane. The protein resides in the endosome membrane. The protein localises to the lysosome membrane. In terms of biological role, antigen-presenting protein that binds self and non-self lipid and glycolipid antigens and presents them to T-cell receptors on natural killer T-cells. In Ovis aries (Sheep), this protein is T-cell surface glycoprotein CD1b-2.